Reading from the N-terminus, the 260-residue chain is Ribonuclease PH (260 aa).

Phosphate is bound by residues R88 and 126–128; that span reads GTR.

This sequence belongs to the RNase PH family. Homohexameric ring arranged as a trimer of dimers.

It carries out the reaction tRNA(n+1) + phosphate = tRNA(n) + a ribonucleoside 5'-diphosphate. In terms of biological role, phosphorolytic 3'-5' exoribonuclease that plays an important role in tRNA 3'-end maturation. Removes nucleotide residues following the 3'-CCA terminus of tRNAs; can also add nucleotides to the ends of RNA molecules by using nucleoside diphosphates as substrates, but this may not be physiologically important. Probably plays a role in initiation of 16S rRNA degradation (leading to ribosome degradation) during starvation. This chain is Ribonuclease PH, found in Mycolicibacterium gilvum (strain PYR-GCK) (Mycobacterium gilvum (strain PYR-GCK)).